The chain runs to 183 residues: UPF0397 protein VFMJ11_1662 (183 aa).

5 helical membrane passes run 8 to 28, 41 to 61, 75 to 95, 110 to 130, and 147 to 167; these read VVVI…MFGI, AVLA…VGFI, WLTW…FPII, FLIF…TSAF, and LCII…FILN.

It belongs to the UPF0397 family.

Its subcellular location is the cell membrane. In Aliivibrio fischeri (strain MJ11) (Vibrio fischeri), this protein is UPF0397 protein VFMJ11_1662.